The following is a 347-amino-acid chain: Olfactory receptor 6J1 (347 aa).

Topologically, residues 1 to 24 are extracellular; the sequence is MGNWTAAVTEFVLLGFSLSREVEL. An N-linked (GlcNAc...) asparagine glycan is attached at N3. A helical transmembrane segment spans residues 25–45; that stretch reads LLLVLLLPTFLLTLLGNLLII. The Cytoplasmic portion of the chain corresponds to 46–53; that stretch reads STVLSCSR. Residues 54–74 traverse the membrane as a helical segment; that stretch reads LHTPMYFFLCNLSILDILFTS. Residues 75-98 lie on the Extracellular side of the membrane; it reads VISPKVLANLGSRDKTISFAGCIT. An intrachain disulfide couples C96 to C188. A helical membrane pass occupies residues 99 to 119; sequence QCYFYFFLGTVEFLLLTVMSY. The Cytoplasmic portion of the chain corresponds to 120-138; that stretch reads DRYATICCPLRYTTIMRPS. A helical transmembrane segment spans residues 139 to 159; it reads VCIGTVVFSWVGGFLSVLFPT. At 160-196 the chain is on the extracellular side; sequence ILISQLPFCGSNIINHFFCDSGPLLALACADTTAIEL. Residues 197–216 form a helical membrane-spanning segment; it reads MDFMLSSMVILCCIVLVAYS. Over 217-236 the chain is Cytoplasmic; the sequence is YTYIILTIVRIPSASGRKKA. The chain crosses the membrane as a helical span at residues 237 to 257; sequence FNTCASHLTIVIISSGITVFI. At 258–270 the chain is on the extracellular side; it reads YVTPSQKEYLEIN. Residues 271–291 traverse the membrane as a helical segment; that stretch reads KIPLVLSSVVTPFLNPFIYTL. Topologically, residues 292 to 347 are cytoplasmic; it reads RNDTVQGVLRDVWVRVRGVFEKRMRAVLRSRLSSNKDHQGRACSSPPCVYSVKLQC.

It belongs to the G-protein coupled receptor 1 family.

The protein localises to the cell membrane. Functionally, odorant receptor. In Homo sapiens (Human), this protein is Olfactory receptor 6J1 (OR6J1).